The primary structure comprises 211 residues: Thymidylate kinase (211 aa).

10–17 is a binding site for ATP; the sequence is GVEGCGKT.

This sequence belongs to the thymidylate kinase family.

It catalyses the reaction dTMP + ATP = dTDP + ADP. Its function is as follows. Phosphorylation of dTMP to form dTDP in both de novo and salvage pathways of dTTP synthesis. The sequence is that of Thymidylate kinase from Nostoc punctiforme (strain ATCC 29133 / PCC 73102).